We begin with the raw amino-acid sequence, 392 residues long: Formate-dependent phosphoribosylglycinamide formyltransferase (392 aa).

Residues 15–16 (EL) and Glu75 contribute to the N(1)-(5-phospho-beta-D-ribosyl)glycinamide site. ATP-binding positions include Arg107, Lys148, 153–158 (SSGKGQ), 188–191 (EEFL), and Glu196. The ATP-grasp domain occupies 112–302 (DLASGELGLH…EFELHLRAVL (191 aa)). Mg(2+)-binding residues include Glu261 and Glu273. Residues Asp280, Lys350, and 357–358 (RR) contribute to the N(1)-(5-phospho-beta-D-ribosyl)glycinamide site.

This sequence belongs to the PurK/PurT family. Homodimer.

The catalysed reaction is N(1)-(5-phospho-beta-D-ribosyl)glycinamide + formate + ATP = N(2)-formyl-N(1)-(5-phospho-beta-D-ribosyl)glycinamide + ADP + phosphate + H(+). The protein operates within purine metabolism; IMP biosynthesis via de novo pathway; N(2)-formyl-N(1)-(5-phospho-D-ribosyl)glycinamide from N(1)-(5-phospho-D-ribosyl)glycinamide (formate route): step 1/1. Its function is as follows. Involved in the de novo purine biosynthesis. Catalyzes the transfer of formate to 5-phospho-ribosyl-glycinamide (GAR), producing 5-phospho-ribosyl-N-formylglycinamide (FGAR). Formate is provided by PurU via hydrolysis of 10-formyl-tetrahydrofolate. This chain is Formate-dependent phosphoribosylglycinamide formyltransferase, found in Synechococcus sp. (strain CC9902).